The sequence spans 373 residues: Flagellar P-ring protein 1 (373 aa).

An N-terminal signal peptide occupies residues 1–24 (MRGISRLYWSLVLICFAFAPIVEA).

It belongs to the FlgI family. As to quaternary structure, the basal body constitutes a major portion of the flagellar organelle and consists of four rings (L,P,S, and M) mounted on a central rod.

Its subcellular location is the periplasm. It is found in the bacterial flagellum basal body. In terms of biological role, assembles around the rod to form the L-ring and probably protects the motor/basal body from shearing forces during rotation. This Hahella chejuensis (strain KCTC 2396) protein is Flagellar P-ring protein 1.